The following is a 59-amino-acid chain: Large ribosomal subunit protein uL30 (59 aa).

This sequence belongs to the universal ribosomal protein uL30 family. As to quaternary structure, part of the 50S ribosomal subunit.

The polypeptide is Large ribosomal subunit protein uL30 (Psychrobacter arcticus (strain DSM 17307 / VKM B-2377 / 273-4)).